The sequence spans 671 residues: Beta-galactosidase 1 (671 aa).

A signal peptide spans 1–18 (MKLIVLIFFLLFINLNYC). Glutamate 200 acts as the Proton donor in catalysis. A glycan (N-linked (GlcNAc...) asparagine) is linked at asparagine 228. Catalysis depends on glutamate 288, which acts as the Nucleophile. Asparagine 321, asparagine 391, asparagine 400, asparagine 499, asparagine 509, asparagine 564, and asparagine 595 each carry an N-linked (GlcNAc...) asparagine glycan.

This sequence belongs to the glycosyl hydrolase 35 family.

It localises to the lysosome. The catalysed reaction is Hydrolysis of terminal non-reducing beta-D-galactose residues in beta-D-galactosides.. Its function is as follows. Cleaves beta-linked terminal galactosyl residues from gangliosides, glycoproteins, and glycosaminoglycans. The sequence is that of Beta-galactosidase 1 (glb1) from Dictyostelium discoideum (Social amoeba).